The primary structure comprises 202 residues: Dephospho-CoA kinase (202 aa).

The 197-residue stretch at 6 to 202 (KVSITGDLSS…EYFYALKGAL (197 aa)) folds into the DPCK domain. 14 to 19 (SSGKTE) lines the ATP pocket.

It belongs to the CoaE family.

It is found in the cytoplasm. The enzyme catalyses 3'-dephospho-CoA + ATP = ADP + CoA + H(+). It functions in the pathway cofactor biosynthesis; coenzyme A biosynthesis; CoA from (R)-pantothenate: step 5/5. In terms of biological role, catalyzes the phosphorylation of the 3'-hydroxyl group of dephosphocoenzyme A to form coenzyme A. This is Dephospho-CoA kinase from Chlamydia pneumoniae (Chlamydophila pneumoniae).